A 648-amino-acid polypeptide reads, in one-letter code: Serine/threonine-protein kinase PrkC (648 aa).

Topologically, residues 1-330 (MLIGKRISGR…KKNGKRKKWP (330 aa)) are cytoplasmic. Residues 11 to 271 (YQILRVIGGG…DMEADIKTAF (261 aa)) form the Protein kinase domain. Residues 17–25 (IGGGGMANV) and Lys40 each bind ATP. Asp134 serves as the catalytic Proton acceptor. Phosphothreonine; by autocatalysis occurs at positions 162, 163, 165, and 167. Residue Ser214 is modified to Phosphoserine; by autocatalysis. Residues Thr290, Thr313, and Thr320 each carry the phosphothreonine; by autocatalysis modification. A helical membrane pass occupies residues 331-351 (WVLLTICLVFITAGILAVTVF). Residues 352–648 (PSLFMPKDVK…YKTIEYPKDE (297 aa)) lie on the Extracellular side of the membrane. 3 PASTA domains span residues 356 to 424 (MPKD…YKST), 425 to 492 (GKAK…TVSI), and 493 to 559 (GPED…TFSL).

It belongs to the protein kinase superfamily. Ser/Thr protein kinase family. In terms of assembly, homodimer. Post-translationally, autophosphorylation on threonine residue(s) and serine residue considerably increases the kinase activity of the protein. Dephosphorylated in vitro by PrpC.

The protein resides in the spore membrane. It catalyses the reaction L-seryl-[protein] + ATP = O-phospho-L-seryl-[protein] + ADP + H(+). The enzyme catalyses L-threonyl-[protein] + ATP = O-phospho-L-threonyl-[protein] + ADP + H(+). Bryostatin activates PrkC activity and induces germination, whereas staurosporine inhibits PrkC and significantly reduced peptidoglycan-dependent germination. Kinase activity of isolated N-terminus stimulated by poly-L-lysine or myelin basic protein. Protein kinase that is responsible for triggering spore germination in response to muropeptides, signaling bacteria to exit dormancy. PrkC is thus a germination receptor that binds peptidoglycan fragments containing m-Dpm (meso-diaminopimelate), which act as spore germinants. Autophosphorylates and phosphorylates EF-G (elongation factor G, fusA); the latter modification is likely necessary for germination in response to peptidoglycan. Another group did not detect phosphorylation of EF-G. PrkC is a substrate in vitro of the cotranscribed phosphatase PrpC, which suggests that they form a functional couple in vivo. Might also be involved in sporulation and biofilm formation. Does not seem to be involved in stress response. The chain is Serine/threonine-protein kinase PrkC (prkC) from Bacillus subtilis (strain 168).